The primary structure comprises 126 residues: Glycine cleavage system H protein (126 aa).

The 82-residue stretch at 23-104 folds into the Lipoyl-binding domain; it reads TLTVGITDHA…PYESWLFKIK (82 aa). K64 carries the N6-lipoyllysine modification.

The protein belongs to the GcvH family. The glycine cleavage system is composed of four proteins: P, T, L and H. (R)-lipoate serves as cofactor.

The glycine cleavage system catalyzes the degradation of glycine. The H protein shuttles the methylamine group of glycine from the P protein to the T protein. This is Glycine cleavage system H protein from Paraburkholderia phytofirmans (strain DSM 17436 / LMG 22146 / PsJN) (Burkholderia phytofirmans).